We begin with the raw amino-acid sequence, 71 residues long: MGKFIGAGLATIGLGGAGIGVGHVAGNFLAGALRNPSAAPGQMANLFVGIAFAEALGIFSFLIALLLMFAV.

The next 2 helical transmembrane spans lie at 4-24 (FIGAGLATIGLGGAGIGVGHV) and 46-66 (LFVGIAFAEALGIFSFLIALL).

This sequence belongs to the ATPase C chain family. In terms of assembly, F-type ATPases have 2 components, F(1) - the catalytic core - and F(0) - the membrane proton channel. F(1) has five subunits: alpha(3), beta(3), gamma(1), delta(1), epsilon(1). F(0) has four main subunits: a(1), b(1), b'(1) and c(10-14). The alpha and beta chains form an alternating ring which encloses part of the gamma chain. F(1) is attached to F(0) by a central stalk formed by the gamma and epsilon chains, while a peripheral stalk is formed by the delta, b and b' chains.

It is found in the cell inner membrane. Functionally, f(1)F(0) ATP synthase produces ATP from ADP in the presence of a proton or sodium gradient. F-type ATPases consist of two structural domains, F(1) containing the extramembraneous catalytic core and F(0) containing the membrane proton channel, linked together by a central stalk and a peripheral stalk. During catalysis, ATP synthesis in the catalytic domain of F(1) is coupled via a rotary mechanism of the central stalk subunits to proton translocation. Key component of the F(0) channel; it plays a direct role in translocation across the membrane. A homomeric c-ring of between 10-14 subunits forms the central stalk rotor element with the F(1) delta and epsilon subunits. This Cereibacter sphaeroides (strain ATCC 17029 / ATH 2.4.9) (Rhodobacter sphaeroides) protein is ATP synthase subunit c 1.